The following is a 1453-amino-acid chain: NRPS-like tryptophan epimerase fscC (1453 aa).

The segment at 37–433 is adenylation; the sequence is SYGELSAMSS…ATHLIRNCVV (397 aa). One can recognise a Carrier domain in the interval 544 to 626; sequence TGSRQSTRHK…LFHTSKSRFT (83 aa). Ser-586 is modified (O-(pantetheine 4'-phosphoryl)serine). The segment at 639-1053 is epimerization (E) domain; it reads FPLSPVQRFF…KDVLESAGVF (415 aa). A condensation region spans residues 1181–1391; the sequence is FFGLQSNERA…AGSSLHQHNQ (211 aa).

This sequence belongs to the NRP synthetase family. Pantetheine 4'-phosphate serves as cofactor.

The protein operates within secondary metabolite biosynthesis. Its function is as follows. NRPS-like tryptophan epimerase; part of the fragmented gene cluster that mediates the biosynthesis of fusarochromene, a tryptophan-derived metabolite closely related to a group of mycotoxins including fusarochromanone. Within the pathway, fscC catalyzes the first step via epimerization of L-tryptophan to provide the intermediate D-tryptophan. D-tryptophan is subsequently hydroxylated by the tryptophan 6-hydroxylase fscE to yield 6-hydroxytryptophan. The pyrrole ring undergoes cleavaged by the tryptophan 2,3-dioxygenase fscD and is finally converted to 4-hydroxykyrunenine by the hydrolase fscH. The NRPS-like oxidoreductase fscA reduces the carboxyl group to primary alcohol and the DMATS-type prenyltransferase fscG performs prenylation, followed by the formation of a chromene ring catalyzed by the oxidoreductase fscI, which leads to desacetylfusarochromene. Epoxidation by fscF and rearrangement reactions of chromene double bonds convert compound desacetylfusarochromene to fusarochromanones. Although specific acetyltransferases were not found near the fsc gene cluster, several predicted enzymes containing the N-acetyltransferase superfamily domain are present in the genome of F.equiseti. These predicted enzymes may have the potential to convert desacetylfusarochromene to fusarochromene. This Fusarium equiseti (Fusarium scirpi) protein is NRPS-like tryptophan epimerase fscC.